Here is a 750-residue protein sequence, read N- to C-terminus: Neprilysin (750 aa).

The segment covering 1-14 has biased composition (polar residues); it reads MGKSESQMDITDIN. The tract at residues 1-20 is disordered; that stretch reads MGKSESQMDITDINTPKPKK. Glycine 2 carries N-myristoyl glycine lipidation. Residues 2-28 lie on the Cytoplasmic side of the membrane; the sequence is GKSESQMDITDINTPKPKKKQRWTPLE. 2 positions are modified to phosphoserine: serine 4 and serine 6. The Stop-transfer sequence motif lies at 16–23; sequence PKPKKKQR. The chain crosses the membrane as a helical; Signal-anchor for type II membrane protein span at residues 29–51; the sequence is ISLSVLVLLLTIIAVTMIALYAT. Residues 52 to 750 are Extracellular-facing; it reads YDDGICKSSD…MNPEKKCRVW (699 aa). The region spanning 56-750 is the Peptidase M13 domain; sequence ICKSSDCIKS…MNPEKKCRVW (695 aa). 6 cysteine pairs are disulfide-bonded: cysteine 57–cysteine 62, cysteine 80–cysteine 735, cysteine 88–cysteine 695, cysteine 143–cysteine 411, cysteine 234–cysteine 242, and cysteine 621–cysteine 747. Position 103 (arginine 103) interacts with a peptide. Asparagine 145 is a glycosylation site (N-linked (GlcNAc...) asparagine). N-linked (GlcNAc...) asparagine glycosylation is found at asparagine 285 and asparagine 325. Histidine 584 contacts Zn(2+). Glutamate 585 is an active-site residue. Histidine 588 is a binding site for Zn(2+). Asparagine 628 carries N-linked (GlcNAc...) asparagine glycosylation. Glutamate 647 contacts Zn(2+). Aspartate 651 functions as the Proton donor in the catalytic mechanism.

This sequence belongs to the peptidase M13 family. Zn(2+) is required as a cofactor. In terms of processing, myristoylation is a determinant of membrane targeting. Glycosylation at Asn-628 is necessary both for surface expression and neutral endopeptidase activity.

The protein localises to the cell membrane. It carries out the reaction Preferential cleavage of polypeptides between hydrophobic residues, particularly with Phe or Tyr at P1'.. It catalyses the reaction substance P + H2O = substance P(1-9) + L-Leu-L-Met-NH2. The enzyme catalyses substance P + H2O = substance P(1-7) + L-Phe-Gly-L-Leu-L-Met-NH2. The catalysed reaction is neurotensin + H2O = neurotensin(1-11) + L-isoleucyl-L-leucine. It carries out the reaction neurotensin + H2O = neurotensin(1-10) + L-tyrosyl-L-isoleucyl-L-leucine. With respect to regulation, inhibited in a dose dependent manner by opiorphin. Activated by K49-P1-20, a twenty-residue synthetic peptide shortened from the snake B.asper myotoxin II. In terms of biological role, thermolysin-like specificity, but is almost confined on acting on polypeptides of up to 30 amino acids. Biologically important in the destruction of opioid peptides such as Met- and Leu-enkephalins by cleavage of a Gly-Phe bond. Catalyzes cleavage of bradykinin, substance P and neurotensin peptides. Able to cleave angiotensin-1, angiotensin-2 and angiotensin 1-9. Involved in the degradation of atrial natriuretic factor (ANF) and brain natriuretic factor (BNP(1-32)). Displays UV-inducible elastase activity toward skin preelastic and elastic fibers. The protein is Neprilysin of Homo sapiens (Human).